A 144-amino-acid chain; its full sequence is Small ribosomal subunit protein eS19 (144 aa).

This sequence belongs to the eukaryotic ribosomal protein eS19 family.

In Argopecten irradians (Bay scallop), this protein is Small ribosomal subunit protein eS19 (RPS19).